We begin with the raw amino-acid sequence, 120 residues long: NAD(P)H-quinone oxidoreductase subunit 3 (120 aa).

The next 3 helical transmembrane spans lie at 11-31 (LIFLLLSALVPVLALTISYLI), 64-84 (MFALVFVVFDVETVFLYPWAV), and 89-109 (LGLLAFIEALIFIAILVVALV).

It belongs to the complex I subunit 3 family. As to quaternary structure, NDH-1 can be composed of about 15 different subunits; different subcomplexes with different compositions have been identified which probably have different functions.

The protein localises to the cell inner membrane. The enzyme catalyses a plastoquinone + NADH + (n+1) H(+)(in) = a plastoquinol + NAD(+) + n H(+)(out). The catalysed reaction is a plastoquinone + NADPH + (n+1) H(+)(in) = a plastoquinol + NADP(+) + n H(+)(out). Its function is as follows. NDH-1 shuttles electrons from an unknown electron donor, via FMN and iron-sulfur (Fe-S) centers, to quinones in the respiratory and/or the photosynthetic chain. The immediate electron acceptor for the enzyme in this species is believed to be plastoquinone. Couples the redox reaction to proton translocation, and thus conserves the redox energy in a proton gradient. Cyanobacterial NDH-1 also plays a role in inorganic carbon-concentration. The polypeptide is NAD(P)H-quinone oxidoreductase subunit 3 (Gloeobacter violaceus (strain ATCC 29082 / PCC 7421)).